The sequence spans 1102 residues: PAN2-PAN3 deadenylation complex catalytic subunit PAN2 (1102 aa).

3 WD repeats span residues 20 to 59, 104 to 144, and 269 to 308; these read DYPR…RYTA, DEME…IVKQ, and NVMS…HFTD. A linker region spans residues 308–445; the sequence is DMAIPIEMPK…STDELESLKP (138 aa). The segment at 423–442 is disordered; sequence AVPDPKVEQVPESSTDELES. One can recognise a USP domain in the interval 446–833; that stretch reads EAPPIYRNLE…LPAVLLFQVK (388 aa). The Exonuclease domain occupies 881-1054; that stretch reads VGLDTEFVSL…EDARTALKLY (174 aa). Asp-884, Glu-886, Asp-993, and Asp-1046 together coordinate a divalent metal cation.

The protein belongs to the peptidase C19 family. PAN2 subfamily. Forms a heterotrimer with an asymmetric homodimer of the regulatory subunit PAN3 to form the poly(A)-nuclease (PAN) deadenylation complex. A divalent metal cation serves as cofactor.

It localises to the cytoplasm. The enzyme catalyses Exonucleolytic cleavage of poly(A) to 5'-AMP.. Its activity is regulated as follows. Positively regulated by the regulatory subunit PAN3. Functionally, catalytic subunit of the poly(A)-nuclease (PAN) deadenylation complex, one of two cytoplasmic mRNA deadenylases involved in mRNA turnover. PAN specifically shortens poly(A) tails of RNA and the activity is stimulated by poly(A)-binding protein PAB1. PAN deadenylation is followed by rapid degradation of the shortened mRNA tails by the CCR4-NOT complex. Deadenylated mRNAs are then degraded by two alternative mechanisms, namely exosome-mediated 3'-5' exonucleolytic degradation, or deadenylation-dependent mRNA decaping and subsequent 5'-3' exonucleolytic degradation by XRN1. May also be involved in post-transcriptional maturation of mRNA poly(A) tails. This Chaetomium globosum (strain ATCC 6205 / CBS 148.51 / DSM 1962 / NBRC 6347 / NRRL 1970) (Soil fungus) protein is PAN2-PAN3 deadenylation complex catalytic subunit PAN2.